A 151-amino-acid polypeptide reads, in one-letter code: Allatostatin-A (151 aa).

An N-terminal signal peptide occupies residues methionine 1–serine 21. Positions serine 22–aspartate 54 are excised as a propeptide. 3 positions are modified to leucine amide: leucine 64, leucine 88, and leucine 99. Residues serine 103–asparagine 135 constitute a propeptide that is removed on maturation. Positions proline 131–arginine 151 are disordered. Leucine 148 is modified (leucine amide).

It belongs to the allatostatin family.

The protein localises to the secreted. May act as a neurotransmitter or neuromodulator. In Drosophila melanogaster (Fruit fly), this protein is Allatostatin-A (AstA).